Here is a 225-residue protein sequence, read N- to C-terminus: Adenosylcobinamide-GDP ribazoletransferase (225 aa).

5 consecutive transmembrane segments (helical) span residues 34 to 54 (FVGI…FWFL), 93 to 113 (NLGT…FYSF), 116 to 136 (VSAF…LLLL), 165 to 185 (PLLL…AITI), and 204 to 224 (VVGA…YFLA).

Belongs to the CobS family. Mg(2+) is required as a cofactor.

Its subcellular location is the cell membrane. It carries out the reaction alpha-ribazole + adenosylcob(III)inamide-GDP = adenosylcob(III)alamin + GMP + H(+). The enzyme catalyses alpha-ribazole 5'-phosphate + adenosylcob(III)inamide-GDP = adenosylcob(III)alamin 5'-phosphate + GMP + H(+). Its pathway is cofactor biosynthesis; adenosylcobalamin biosynthesis; adenosylcobalamin from cob(II)yrinate a,c-diamide: step 7/7. Its function is as follows. Joins adenosylcobinamide-GDP and alpha-ribazole to generate adenosylcobalamin (Ado-cobalamin). Also synthesizes adenosylcobalamin 5'-phosphate from adenosylcobinamide-GDP and alpha-ribazole 5'-phosphate. The sequence is that of Adenosylcobinamide-GDP ribazoletransferase (cobS1) from Archaeoglobus fulgidus (strain ATCC 49558 / DSM 4304 / JCM 9628 / NBRC 100126 / VC-16).